A 604-amino-acid polypeptide reads, in one-letter code: Sulfite reductase [NADPH] flavoprotein alpha-component (604 aa).

The Flavodoxin-like domain maps to 65–203; sequence VTILYGSQTG…AAGQWHADVL (139 aa). Residues 71–76, 118–121, and 154–163 contribute to the FMN site; these read SQTGNG, STHG, and LGDSSYEFFC. An FAD-binding FR-type domain is found at 236–453; sequence QNPYSAEVLV…VEPNKHFRLP (218 aa). FAD-binding positions include Thr324, Leu358, 392–395, 410–412, and 425–428; these read RLYS, TVA, and GGAS. NADP(+) contacts are provided by residues 524-525, 530-534, and Asp566; these read SR and KIYVQ. Tyr604 is a binding site for FAD.

Belongs to the NADPH-dependent sulphite reductase flavoprotein subunit CysJ family. This sequence in the N-terminal section; belongs to the flavodoxin family. It in the C-terminal section; belongs to the flavoprotein pyridine nucleotide cytochrome reductase family. Alpha(8)-beta(8). The alpha component is a flavoprotein, the beta component is a hemoprotein. It depends on FAD as a cofactor. Requires FMN as cofactor.

It carries out the reaction hydrogen sulfide + 3 NADP(+) + 3 H2O = sulfite + 3 NADPH + 4 H(+). Its pathway is sulfur metabolism; hydrogen sulfide biosynthesis; hydrogen sulfide from sulfite (NADPH route): step 1/1. Its function is as follows. Component of the sulfite reductase complex that catalyzes the 6-electron reduction of sulfite to sulfide. This is one of several activities required for the biosynthesis of L-cysteine from sulfate. The flavoprotein component catalyzes the electron flow from NADPH -&gt; FAD -&gt; FMN to the hemoprotein component. The sequence is that of Sulfite reductase [NADPH] flavoprotein alpha-component from Shewanella sp. (strain MR-7).